A 251-amino-acid chain; its full sequence is Mast cell protease 3 (251 aa).

A signal peptide spans 1-17; that stretch reads MVLFLLLVALLSPAGEA. A propeptide spans 18–19 (activation peptide); that stretch reads GK. A Peptidase S1 domain is found at 20–243; it reads IIGGHEAKPH…FLSWIQRTMR (224 aa). A disulfide bridge connects residues C48 and C64. H63 (charge relay system) is an active-site residue. Residue N70 is glycosylated (N-linked (GlcNAc...) asparagine). D107 serves as the catalytic Charge relay system. Disulfide bonds link C141-C207 and C172-C186. S201 (charge relay system) is an active-site residue.

This sequence belongs to the peptidase S1 family. Granzyme subfamily.

It localises to the secreted. Its subcellular location is the cytoplasmic granule. In Ovis aries (Sheep), this protein is Mast cell protease 3.